Here is a 691-residue protein sequence, read N- to C-terminus: Elongation factor G (691 aa).

In terms of domain architecture, tr-type G spans 8 to 282 (ERVRNIGIAA…AVVDYLPAPI (275 aa)). Residues 17–24 (AHIDAGKT), 81–85 (DTPGH), and 135–138 (NKMD) each bind GTP.

This sequence belongs to the TRAFAC class translation factor GTPase superfamily. Classic translation factor GTPase family. EF-G/EF-2 subfamily.

It is found in the cytoplasm. Functionally, catalyzes the GTP-dependent ribosomal translocation step during translation elongation. During this step, the ribosome changes from the pre-translocational (PRE) to the post-translocational (POST) state as the newly formed A-site-bound peptidyl-tRNA and P-site-bound deacylated tRNA move to the P and E sites, respectively. Catalyzes the coordinated movement of the two tRNA molecules, the mRNA and conformational changes in the ribosome. In Synechococcus sp. (strain CC9311), this protein is Elongation factor G.